Here is a 90-residue protein sequence, read N- to C-terminus: Mitochondrial import inner membrane translocase subunit Tim10-B (90 aa).

The Twin CX3C motif motif lies at 29–54; it reads CHKKCVPPHYKEAELSKGESVCLDRC. Disulfide bonds link C29-C54 and C33-C50.

Belongs to the small Tim family. As to quaternary structure, heterohexamer; composed of 3 copies of TIMM9 and 3 copies of TIMM10/TIM10A, named soluble 70 kDa complex. The complex forms a 6-bladed alpha-propeller structure and associates with the TIMM22 component of the TIM22 complex. Interacts with multi-pass transmembrane proteins in transit.

Its subcellular location is the mitochondrion inner membrane. Functionally, mitochondrial intermembrane chaperone that participates in the import and insertion of multi-pass transmembrane proteins into the mitochondrial inner membrane. May also be required for the transfer of beta-barrel precursors from the TOM complex to the sorting and assembly machinery (SAM complex) of the outer membrane. Acts as a chaperone-like protein that protects the hydrophobic precursors from aggregation and guide them through the mitochondrial intermembrane space. The sequence is that of Mitochondrial import inner membrane translocase subunit Tim10-B (timm10-b) from Xenopus laevis (African clawed frog).